Consider the following 387-residue polypeptide: Protein ERD1 homolog 2 (387 aa).

8 consecutive transmembrane segments (helical) span residues 20 to 40 (IGLL…LIYI), 92 to 112 (AGYC…ILFL), 126 to 146 (PIYP…PFPW), 177 to 197 (FIVS…YIFG), 217 to 237 (GTFF…LQCL), 252 to 272 (LLSA…AIIH), 285 to 305 (GYLF…TFLW), and 326 to 346 (FPMF…VTWS). Positions 212 to 387 (DLKCDGTFFV…LFFHLDAISS (176 aa)) constitute an EXS domain.

The protein belongs to the ERD1 family.

It is found in the membrane. This chain is Protein ERD1 homolog 2, found in Schizosaccharomyces pombe (strain 972 / ATCC 24843) (Fission yeast).